Reading from the N-terminus, the 726-residue chain is MDPIRFGLSRVPFAHCYNKRVIFRANYLVPLTWLKNNVAYKSTNTLLLPTPNAEYYSTSKLSSQVNVSLNSLSQKASSGSKIYPFKNSFPLPFSRSILPIRSLAFLKLCVRHNSTVPSKDEQAQDISKINTNGTLQTPNKKVNVFRLFTLARGQGWNFFIAGSLLLVSSGVTMSIPYIVGKILDAGSSGDSSVTHIMGIPSGTFYIGLLGLFFLGSACNFGRIITLRLLSERIVSRLRARLFAKCMSLDGAFFDFHKHGDLISRLTTDSSIVGKSLSMYLSDGLRSSVSAIAGIGMMLYVSMRLTGYMSLIVPPIALGAFFYGEYVRKLSRTTQDALGDLTRVSEEKLANVRTTQAFLGERQEVNRYNDYIRNLFVLAKREAFASGIFFGSTGFLGNATVIAILALGGRMVAAGDITVGQLSSFLLYTVYAGGSIVGLSGCFTDIMKGLGAASRLFELLDAKPKIAPTVGIPVPVTVGKAILSFRNVGFAYPTRPSASIFDNLSFDIHPGTNVAIVAPSGGGKSTISQLLLRFYAPSSGKILADGVDISTYNVHQWRSHFGLVGQEPVLFSGTIGENIAYGKSNASQEEIEDAAKRANCSFVLSFPEKWSTQVGTRGLQLSGGQKQRIAIARALLRNPAFLILDEATSALDGEAEVMVDKTIQSLMHNRSMTTITIAHKLATIRRADQIIVVGDGKVLEQGSFERLSRPGTNFYKLMRWQLGKVEP.

Residues 1-112 (MDPIRFGLSR…LAFLKLCVRH (112 aa)) constitute a mitochondrion transit peptide. 3 N-linked (GlcNAc...) asparagine glycosylation sites follow: Asn-66, Asn-113, and Asn-132. The next 5 membrane-spanning stretches (helical) occupy residues 158 to 178 (FFIA…IPYI), 196 to 216 (IMGI…FLGS), 306 to 326 (GYMS…GEYV), 386 to 406 (GIFF…ILAL), and 423 to 443 (SFLL…GCFT). Residues 158-447 (FFIAGSLLLV…LSGCFTDIMK (290 aa)) enclose the ABC transmembrane type-1 domain. Positions 482–719 (LSFRNVGFAY…GTNFYKLMRW (238 aa)) constitute an ABC transporter domain. N-linked (GlcNAc...) asparagine glycosylation is present at Asn-502. 517–524 (APSGGGKS) contributes to the ATP binding site. Residues Asn-584, Asn-598, and Asn-668 are each glycosylated (N-linked (GlcNAc...) asparagine).

This sequence belongs to the ABC transporter superfamily. ABCB family. Mitochondrial peptide exporter (TC 3.A.1.212) subfamily.

The protein resides in the mitochondrion inner membrane. Its function is as follows. Mediates export of peptides generated upon proteolysis of mitochondrial inner membrane proteins. In Schizosaccharomyces pombe (strain 972 / ATCC 24843) (Fission yeast), this protein is ATP-dependent permease MDL1, mitochondrial (mdl1).